Consider the following 776-residue polypeptide: Calcium-independent phospholipase A2-gamma (776 aa).

Composition is skewed to basic and acidic residues over residues 226-238 (RQLQDKPCLEESK) and 307-331 (LKSDPKSQPEEEEEPSKTDEPICKD). 2 disordered regions span residues 226 to 274 (RQLQ…EALP) and 306 to 331 (KLKSDPKSQPEEEEEPSKTDEPICKD). One can recognise a PNPLA domain in the interval 439-634 (LAIDGGGTRG…LLNNPSALAL (196 aa)). The GXGXXG motif lies at 443–448 (GGGTRG). A helical transmembrane segment spans residues 469–489 (LFDYICGVSTGAILAFMLGLF). The GXSXG motif lies at 475 to 479 (GVSTG). S477 serves as the catalytic Nucleophile. Residue D621 is the Proton acceptor of the active site. The DGA/G motif lies at 621 to 623 (DGG). An N6-succinyllysine modification is found at K730.

It localises to the endoplasmic reticulum membrane. Its subcellular location is the microsome membrane. The protein localises to the mitochondrion membrane. It is found in the peroxisome membrane. The enzyme catalyses a 1,2-diacyl-sn-glycero-3-phosphocholine + H2O = a 1-acyl-sn-glycero-3-phosphocholine + a fatty acid + H(+). It carries out the reaction a 1,2-diacyl-sn-glycero-3-phosphocholine + H2O = a 2-acyl-sn-glycero-3-phosphocholine + a fatty acid + H(+). The catalysed reaction is a 1,2-diacyl-sn-glycero-3-phosphoethanolamine + H2O = a 1-acyl-sn-glycero-3-phosphoethanolamine + a fatty acid + H(+). It catalyses the reaction a 1-O-(1Z-alkenyl)-2-acyl-sn-glycero-3-phosphocholine + H2O = a 1-O-(1Z-alkenyl)-sn-glycero-3-phosphocholine + a fatty acid + H(+). The enzyme catalyses a 1-acyl-sn-glycero-3-phosphocholine + H2O = sn-glycerol 3-phosphocholine + a fatty acid + H(+). It carries out the reaction 1-acyl-2-(9Z,12Z)-octadecadienoyl-sn-glycero-3-phosphocholine + H2O = a 1-acyl-sn-glycero-3-phosphocholine + (9Z,12Z)-octadecadienoate + H(+). The catalysed reaction is 1-acyl-2-(5Z,8Z,11Z,14Z-eicosatetraenoyl)-sn-glycero-3-phosphocholine + H2O = a 1-acyl-sn-glycero-3-phosphocholine + (5Z,8Z,11Z,14Z)-eicosatetraenoate + H(+). It catalyses the reaction 1-hexadecanoyl-2-(5Z,8Z,11Z,14Z-eicosatetraenoyl)-sn-glycero-3-phosphocholine + H2O = 1-hexadecanoyl-sn-glycero-3-phosphocholine + (5Z,8Z,11Z,14Z)-eicosatetraenoate + H(+). The enzyme catalyses 1-octadecanoyl-2-(9Z-octadecenoyl)-sn-glycero-3-phosphocholine + H2O = 1-octadecanoyl-sn-glycero-3-phosphocholine + (9Z)-octadecenoate + H(+). It carries out the reaction 1-hexadecanoyl-2-(9Z-octadecenoyl)-sn-glycero-3-phosphocholine + H2O = 1-hexadecanoyl-sn-glycero-3-phosphocholine + (9Z)-octadecenoate + H(+). The catalysed reaction is 1-hexadecanoyl-2-(9Z,12Z-octadecadienoyl)-sn-glycero-3-phosphocholine + H2O = (9Z,12Z)-octadecadienoate + 1-hexadecanoyl-sn-glycero-3-phosphocholine + H(+). It catalyses the reaction 1-acyl-2-(9Z,12Z)-octadecadienoyl-sn-glycero-3-phosphoethanolamine + H2O = a 1-acyl-sn-glycero-3-phosphoethanolamine + (9Z,12Z)-octadecadienoate + H(+). The enzyme catalyses 1-acyl-2-(5Z,8Z,11Z,14Z)-eicosatetraenoyl-sn-glycero-3-phosphoethanolamine + H2O = a 1-acyl-sn-glycero-3-phosphoethanolamine + (5Z,8Z,11Z,14Z)-eicosatetraenoate + H(+). It carries out the reaction 1-hexadecanoyl-2-(5Z,8Z,11Z,14Z-eicosatetraenoyl)-sn-glycero-3-phosphoethanolamine + H2O = 1-hexadecanoyl-sn-glycero-3-phosphoethanolamine + (5Z,8Z,11Z,14Z)-eicosatetraenoate + H(+). The catalysed reaction is 1-hexadecanoyl-2-(5Z,8Z,11Z,14Z-eicosatetraenoyl)-sn-glycero-3-phosphocholine + H2O = 2-(5Z,8Z,11Z,14Z)-eicosatetraenoyl-sn-glycero-3-phosphocholine + hexadecanoate + H(+). It catalyses the reaction 1-octadecanoyl-2-(9Z-octadecenoyl)-sn-glycero-3-phosphocholine + H2O = 2-(9Z-octadecenoyl)-sn-glycero-3-phosphocholine + octadecanoate + H(+). The enzyme catalyses 1-hexadecanoyl-2-(4Z,7Z,10Z,13Z,16Z,19Z-docosahexaenoyl)-sn-glycero-3-phosphocholine + H2O = 2-(4Z,7Z,10Z,13Z,16Z,19Z-docosahexaenoyl)-sn-glycero-3-phosphocholine + hexadecanoate + H(+). It carries out the reaction 1-O-(1Z)-hexadecenyl-2 (5Z,8Z,11Z,14Z)-eicosatetraenoyl-sn-glycero-3-phosphocholine + H2O = 1-(1Z-hexadecenyl)-sn-glycero-3-phosphocholine + (5Z,8Z,11Z,14Z)-eicosatetraenoate + H(+). The catalysed reaction is 1-O-(1Z-hexadecenyl)-2-(9Z-octadecenoyl)-sn-glycero-3-phosphocholine + H2O = 1-(1Z-hexadecenyl)-sn-glycero-3-phosphocholine + (9Z)-octadecenoate + H(+). It catalyses the reaction 1-hexadecanoyl-sn-glycero-3-phosphocholine + H2O = sn-glycerol 3-phosphocholine + hexadecanoate + H(+). The enzyme catalyses 1',3'-bis-[1,2-di-(9Z,12Z-octadecadienoyl)-sn-glycero-3-phospho]-glycerol + H2O = 1'-[1,2-di-(9Z,12Z-octadecadienoyl)-sn-glycero-3-phospho]-3'-[1-(9Z,12Z-octadecadienoyl)-sn-glycero-3-phospho]-glycerol + (9Z,12Z)-octadecadienoate + H(+). It carries out the reaction 1'-[1-acyl-2-(9-hydroxy-(10E,12Z)-octadecadienoyl)-sn-glycero-3-phospho]-3'-[1,2-diacyl-sn-glycero-3-phospho]-glycerol + H2O = 9-hydroxy-(10E,12Z)-octadecadienoate + 1'-[1,2-diacyl-sn-glycero-3-phospho],3'-[1-acyl-sn-glycero-3-phospho]-glycerol + H(+). Its pathway is phospholipid metabolism. Its activity is regulated as follows. Calcium-independent phospholipase. Functionally, calcium-independent and membrane-bound phospholipase, that catalyzes the esterolytic cleavage of fatty acids from glycerophospholipids to yield free fatty acids and lysophospholipids, hence regulating membrane physical properties and the release of lipid second messengers and growth factors. Hydrolyzes phosphatidylethanolamine, phosphatidylcholine and probably phosphatidylinositol with a possible preference for the former. Has also a broad substrate specificity in terms of fatty acid moieties, hydrolyzing saturated and mono-unsaturated fatty acids at nearly equal rates from either the sn-1 or sn-2 position in diacyl phosphatidylcholine. However, has a weak activity toward polyunsaturated fatty acids at the sn-2 position, and thereby favors the production of 2-arachidonoyl lysophosphatidylcholine, a key branch point metabolite in eicosanoid signaling. On the other hand, can produce arachidonic acid from the sn-1 position of diacyl phospholipid and from the sn-2 position of arachidonate-containing plasmalogen substrates. Therefore, plays an important role in the mobilization of arachidonic acid in response to cellular stimuli and the generation of lipid second messengers. Can also hydrolyze lysophosphatidylcholine. In the mitochondrial compartment, catalyzes the hydrolysis and release of oxidized aliphatic chains from cardiolipin and integrates mitochondrial bioenergetics and signaling. It is essential for maintaining efficient bioenergetic mitochondrial function through tailoring mitochondrial membrane lipid metabolism and composition. This is Calcium-independent phospholipase A2-gamma from Rattus norvegicus (Rat).